The following is a 215-amino-acid chain: Probable maleylacetoacetate isomerase (215 aa).

Residues methionine 2 to arginine 85 enclose the GST N-terminal domain. One can recognise a GST C-terminal domain in the interval arginine 90–cysteine 215.

Belongs to the GST superfamily. Zeta family.

The enzyme catalyses 4-maleylacetoacetate = 4-fumarylacetoacetate. The protein operates within amino-acid degradation; L-phenylalanine degradation; acetoacetate and fumarate from L-phenylalanine: step 5/6. The sequence is that of Probable maleylacetoacetate isomerase (maiA) from Vibrio cholerae serotype O1 (strain ATCC 39315 / El Tor Inaba N16961).